The primary structure comprises 430 residues: Serine--tRNA ligase (430 aa).

Thr235 to Glu237 lines the L-serine pocket. Arg266–Glu268 is a binding site for ATP. Glu289 contributes to the L-serine binding site. Glu353 to Ser356 is an ATP binding site. Ser388 serves as a coordination point for L-serine.

Belongs to the class-II aminoacyl-tRNA synthetase family. Type-1 seryl-tRNA synthetase subfamily. As to quaternary structure, homodimer. The tRNA molecule binds across the dimer.

It is found in the cytoplasm. The catalysed reaction is tRNA(Ser) + L-serine + ATP = L-seryl-tRNA(Ser) + AMP + diphosphate + H(+). It carries out the reaction tRNA(Sec) + L-serine + ATP = L-seryl-tRNA(Sec) + AMP + diphosphate + H(+). It functions in the pathway aminoacyl-tRNA biosynthesis; selenocysteinyl-tRNA(Sec) biosynthesis; L-seryl-tRNA(Sec) from L-serine and tRNA(Sec): step 1/1. Functionally, catalyzes the attachment of serine to tRNA(Ser). Is also able to aminoacylate tRNA(Sec) with serine, to form the misacylated tRNA L-seryl-tRNA(Sec), which will be further converted into selenocysteinyl-tRNA(Sec). The sequence is that of Serine--tRNA ligase from Azoarcus sp. (strain BH72).